Reading from the N-terminus, the 524-residue chain is 2-isopropylmalate synthase (524 aa).

The region spanning 12 to 274 is the Pyruvate carboxyltransferase domain; the sequence is VIIFDTTLRD…WNRIETTMLT (263 aa). Mn(2+) is bound by residues Asp-21, His-209, His-211, and Asn-245. The interval 398–524 is regulatory domain; that stretch reads KLMSLTVIAG…EDAPAVAVAG (127 aa).

It belongs to the alpha-IPM synthase/homocitrate synthase family. LeuA type 1 subfamily. In terms of assembly, homodimer. The cofactor is Mn(2+).

The protein resides in the cytoplasm. The catalysed reaction is 3-methyl-2-oxobutanoate + acetyl-CoA + H2O = (2S)-2-isopropylmalate + CoA + H(+). It functions in the pathway amino-acid biosynthesis; L-leucine biosynthesis; L-leucine from 3-methyl-2-oxobutanoate: step 1/4. Functionally, catalyzes the condensation of the acetyl group of acetyl-CoA with 3-methyl-2-oxobutanoate (2-ketoisovalerate) to form 3-carboxy-3-hydroxy-4-methylpentanoate (2-isopropylmalate). The sequence is that of 2-isopropylmalate synthase from Rhodopseudomonas palustris (strain ATCC BAA-98 / CGA009).